Reading from the N-terminus, the 778-residue chain is DEK domain-containing chromatin-associated protein 4 (778 aa).

Disordered regions lie at residues 1–334 and 475–689; these read MGEE…RPVR and LVNE…PSDE. A compositionally biased stretch (polar residues) spans 14–26; it reads ANGTSSLQKTSDA. Composition is skewed to basic and acidic residues over residues 40–95, 121–153, 165–185, and 209–243; these read EVQE…PEAD, AVMKESVESADNKDAENPEGEQEKESKEEKLEG, EEKLVGGDKGDDVDEAEKVEN, and TNKGEEVKEANKEDDVEADTKVAEPEVEDKKTESK. Positions 191-300 form a coiled coil; that stretch reads KEEALKEKNE…KEDIKKSNKR (110 aa). Over residues 244–286 the composition is skewed to acidic residues; sequence DENEDKEEEKEDEKEESMDDKEDEKEESNDDDKEDEKEESNDD. Composition is skewed to basic and acidic residues over residues 287-296 and 303-323; these read KEDKKEDIKK and GKTEKTRGKTKSDEEKKDIEP. The short motif at 289-296 is the Nuclear localization signal 1 element; the sequence is DKKEDIKK. The Nuclear localization signal 2 signature appears at 489 to 496; that stretch reads PKKSSPAA. A compositionally biased stretch (low complexity) spans 491-502; the sequence is KSSPAAGSSSSK. A coiled-coil region spans residues 526–587; the sequence is DDESEEEKED…EESEEETKKK (62 aa). Acidic residues-rich tracts occupy residues 527 to 553 and 560 to 582; these read DESEEEKEDDEEEEKEQEVEEEEEENE and SEDEAPQLSESEENVESEEESEE. Residues 618-625 carry the Nuclear localization signal 3 motif; sequence PKKATQKR. A compositionally biased stretch (basic residues) spans 621-631; the sequence is ATQKRSAGKRK. A compositionally biased stretch (basic and acidic residues) spans 678-689; it reads KGKDKNKEPSDE. Residues 685-740 form the DEK-C domain; that stretch reads EPSDEELKTAIIDILKGVDFNTATFTDILKRLDAKFNISLASKKSSIKRMIQDELT. 2 consecutive DNA-binding regions follow at residues 703 to 717 and 732 to 736; these read DFNTATFTDILKRLD and KRMIQ. Residues 732–766 are a coiled coil; sequence KRMIQDELTKLADEAEDEEGEEEDAEHEEEEEKEK. A disordered region spans residues 741–778; the sequence is KLADEAEDEEGEEEDAEHEEEEEKEKAKGSGGGEEVKA. Residues 745–763 are compositionally biased toward acidic residues; it reads EAEDEEGEEEDAEHEEEEE. A compositionally biased stretch (basic and acidic residues) spans 764 to 778; it reads KEKAKGSGGGEEVKA.

In terms of assembly, interacts with DEK3.

The protein localises to the nucleus. It localises to the nucleolus. In terms of biological role, chromatin-associated protein which contributes to the modulation of chromatin structure (such as super-helical structure of DNA) and function. Binds to chromatin of protein-coding genes throughout the genome to regulate nucleosome occupancy and chromatin accessibility, and to modulate the expression of target genes. The sequence is that of DEK domain-containing chromatin-associated protein 4 from Arabidopsis thaliana (Mouse-ear cress).